The following is a 478-amino-acid chain: Odorant receptor coreceptor (478 aa).

Topologically, residues 1-43 (MMKMKQQGLVADLLPNIRVMKTFGHFVFNYYNDNSSKYLHKVY) are cytoplasmic. Residues 44–64 (CCVNLFMLLLQFGLCAVNLIV) traverse the membrane as a helical segment. Residues 65 to 73 (ESADVDDLT) are Extracellular-facing. A helical transmembrane segment spans residues 74–94 (ANTITLLFFTHSIVKICYFAI). Over 95–133 (RSKYFYRTWAIWNNPNSHPLFAESNARYHAIALKKMRLL) the chain is Cytoplasmic. Residues 134–154 (LFLVGGTTMLAAVAWTVLTFF) traverse the membrane as a helical segment. Over 155 to 190 (EHPIRKIVDPVTNETEIIELPQLLIRSFYPFDAGKG) the chain is Extracellular. Residue asparagine 167 is glycosylated (N-linked (GlcNAc...) asparagine). A helical membrane pass occupies residues 191–211 (ITHVLVLVYQFYWVLFMLIDA). Residues 212–349 (NSLDVLFCSW…IVRLVTAVGD (138 aa)) are Cytoplasmic-facing. Residues 261–281 (SADHLRDGDNPPPPPPPQSDN) are disordered. A helical transmembrane segment spans residues 350-370 (AYGFALLLHMLTTTITLTLLA). The Extracellular segment spans residues 371–382 (YQATKVNGINVY). A helical membrane pass occupies residues 383-403 (AASTIGYILYTFGQVFLFCIF). Topologically, residues 404–454 (GNRLIEESTSVMEAAYSCHWYDGSEEAKTFVQIVCQQCQKAMSISGAKFFT) are cytoplasmic. Residues 455-475 (VSLDLFASVLGAVVTYFMVLV) form a helical membrane-spanning segment. Topologically, residues 476–478 (QLK) are extracellular.

Belongs to the insect chemoreceptor superfamily. Heteromeric odorant receptor channel (TC 1.A.69) family. Orco subfamily. As to quaternary structure, heterodimer with conventional odorant receptors (ORs). As to expression, present in antennae (at protein level).

It localises to the cell membrane. Its function is as follows. Odorant coreceptor which complexes with conventional odorant receptors (ORs) to form odorant-sensing units, providing sensitive and prolonged odorant signaling and calcium permeability. Obligate coreceptor of all odorant receptors. Orco is a universal and integral part of the functional odorant receptor, involved in the dendritic localization of other olfactory receptors. Can form functional ion channels in the absence of an odor-binding odorant receptor. Plays a central role in the perception of olfactory stimuli in ants and is essential for ant social organization. Required for pheromone sensing. Also required for the development and maintenance of odorant receptor neurons (ORNs) and of antennal lobe glomeruli. The sequence is that of Odorant receptor coreceptor from Ooceraea biroi (Clonal raider ant).